The sequence spans 156 residues: 6,7-dimethyl-8-ribityllumazine synthase (156 aa).

Residues Phe24, 58–60, and 82–84 contribute to the 5-amino-6-(D-ribitylamino)uracil site; these read AFE and VII. Residue 87–88 coordinates (2S)-2-hydroxy-3-oxobutyl phosphate; the sequence is ST. His90 (proton donor) is an active-site residue. Phe115 lines the 5-amino-6-(D-ribitylamino)uracil pocket. Residue Arg129 coordinates (2S)-2-hydroxy-3-oxobutyl phosphate.

Belongs to the DMRL synthase family.

It carries out the reaction (2S)-2-hydroxy-3-oxobutyl phosphate + 5-amino-6-(D-ribitylamino)uracil = 6,7-dimethyl-8-(1-D-ribityl)lumazine + phosphate + 2 H2O + H(+). The protein operates within cofactor biosynthesis; riboflavin biosynthesis; riboflavin from 2-hydroxy-3-oxobutyl phosphate and 5-amino-6-(D-ribitylamino)uracil: step 1/2. Catalyzes the formation of 6,7-dimethyl-8-ribityllumazine by condensation of 5-amino-6-(D-ribitylamino)uracil with 3,4-dihydroxy-2-butanone 4-phosphate. This is the penultimate step in the biosynthesis of riboflavin. The sequence is that of 6,7-dimethyl-8-ribityllumazine synthase from Chlorobaculum parvum (strain DSM 263 / NCIMB 8327) (Chlorobium vibrioforme subsp. thiosulfatophilum).